Reading from the N-terminus, the 201-residue chain is UPF0301 protein Mvan_6057 (201 aa).

The protein belongs to the UPF0301 (AlgH) family.

The sequence is that of UPF0301 protein Mvan_6057 from Mycolicibacterium vanbaalenii (strain DSM 7251 / JCM 13017 / BCRC 16820 / KCTC 9966 / NRRL B-24157 / PYR-1) (Mycobacterium vanbaalenii).